The primary structure comprises 203 residues: Guanylate kinase (203 aa).

Residues 5–183 (GVLYILSAPS…AVEELKSVII (179 aa)) enclose the Guanylate kinase-like domain. Position 12 to 19 (12 to 19 (APSGAGKT)) interacts with ATP.

The protein belongs to the guanylate kinase family.

It is found in the cytoplasm. It carries out the reaction GMP + ATP = GDP + ADP. Essential for recycling GMP and indirectly, cGMP. In Geobacter sulfurreducens (strain ATCC 51573 / DSM 12127 / PCA), this protein is Guanylate kinase.